Here is a 640-residue protein sequence, read N- to C-terminus: MAESEGSNTENGKVGAVKSENLDRGVAAIKNQFLTTKEKFHAFIDADGKDVTEKETCSELSLNDAENTTRTENAAEPEAKRIKLDDGSSEGQDQPPKTAENKQEKKRARGQNKSRPHMKHSQFEENKLCPSVTQECASKCFFGDKCKFSHDVAKYVSQKPEDIRPNCHLYETFGKCIYGVTCRFAKSHLGEDFKNIINEELMKEWEGKVLVKNSLDKSLKEQLRKKKVVFEKSDKYLKLCFKSGDSSKMKNPVVKEDSAVQVTQKDSPITTVGAVTDEDVIKLRPCEKKTIDFRNKLYLAPLTTCGNLPFRRICKRLGADITCGEMAMCTNLLQGQPSEWALLKRHHSEDIFGVQLEGAFPDTMTKCAELLNRTIDVDFVDINVGCPIDLVYKKGGGCGLMNRTNKFEQIVKGMNSVLDVPLTVKIRTGVQEKVNIAHKLIPNLRDWGVSLVTLHGRSREQRYTKLANWEYIDQCAKIASPVPLFGNGDIISYEDANRALQTGVAGVMLARGALFKPWLFTEIKEQRHWDISSTERFDILKDFTNYGLEHWGSDCQGVEKTRKFMLEWLSFLCRYIPVGLLEHVPQKINERPPYYMGRDYLETLMASQNVTDWIKISEMLLGPVPPNFTFLPKHKANSYK.

Residues 1 to 11 (MAESEGSNTEN) are compositionally biased toward polar residues. Disordered regions lie at residues 1 to 23 (MAES…ENLD) and 43 to 123 (FIDA…HSQF). Positions 43–57 (FIDADGKDVTEKETC) are enriched in basic and acidic residues. Over residues 58–72 (SELSLNDAENTTRTE) the composition is skewed to polar residues. The span at 77-86 (PEAKRIKLDD) shows a compositional bias: basic and acidic residues. Basic residues predominate over residues 104–120 (EKKRARGQNKSRPHMKH). 2 C3H1-type zinc fingers span residues 123–153 (FEEN…HDVA) and 161–191 (EDIR…HLGE). FMN is bound by residues 301-303 (PLT) and Q355. The Proton donor role is filled by C386. FMN-binding positions include K425, H455, 487–489 (NGD), and 510–511 (AR).

This sequence belongs to the Dus family. Dus3 subfamily. FMN is required as a cofactor.

It catalyses the reaction 5,6-dihydrouridine(47) in tRNA + NAD(+) = uridine(47) in tRNA + NADH + H(+). The enzyme catalyses 5,6-dihydrouridine(47) in tRNA + NADP(+) = uridine(47) in tRNA + NADPH + H(+). The catalysed reaction is a 5,6-dihydrouridine in mRNA + NAD(+) = a uridine in mRNA + NADH + H(+). It carries out the reaction a 5,6-dihydrouridine in mRNA + NADP(+) = a uridine in mRNA + NADPH + H(+). Its function is as follows. Catalyzes the synthesis of dihydrouridine, a modified base, in various RNAs, such as tRNAs, mRNAs and some long non-coding RNAs (lncRNAs). Mainly modifies the uridine in position 47 (U47) in the D-loop of most cytoplasmic tRNAs. Also able to mediate the formation of dihydrouridine in some mRNAs, thereby regulating their translation. The protein is tRNA-dihydrouridine(47) synthase [NAD(P)(+)]-like (dus3l) of Xenopus laevis (African clawed frog).